Consider the following 1497-residue polypeptide: Collagen alpha-1(XVII) chain (1497 aa).

Disordered stretches follow at residues 1 to 154 (MDVT…PSTR) and 167 to 186 (GSRSASVSPTRNSSNTLPIP). Over 1–467 (MDVTKKNKRD…CGSCCSWWKW (467 aa)) the chain is Cytoplasmic. Residues 1-566 (MDVTKKNKRD…MMEQENGNLR (566 aa)) form a nonhelical region (NC16) region. The span at 9 to 19 (RDGTEVTERIV) shows a compositional bias: basic and acidic residues. Composition is skewed to polar residues over residues 57–96 (LTHGSSGYINSTGSTRGHASTSSYRRAHSPASTLPNSPGS) and 169–183 (RSASVSPTRNSSNTL). Residues 145–230 (RLQSASPSTR…WSSTLPAGSS (86 aa)) are necessary for interaction with DST and for the recruitment of DST to hemidesmosome. A helical; Signal-anchor for type II membrane protein membrane pass occupies residues 468–488 (LLGLLLTWLLLLGLLFGLIAL). The Extracellular portion of the chain corresponds to 489–1497 (AEEVRKLKAR…RRRRSIAVKP (1009 aa)). S544 carries the phosphoserine; by CK2 modification. Disordered regions lie at residues 562-1011 (NGNL…SSSG), 1209-1234 (GLSFIPGPPGPPGPPGPRGPPGVSGA), and 1261-1316 (SFIV…TGGG). Residues 567–1482 (GSPGPKGDMG…KGEKGDKGDQ (916 aa)) form a triple-helical region region. A compositionally biased stretch (pro residues) spans 590–602 (PGIPGPLGHPGPQ). Low complexity-rich tracts occupy residues 604 to 635 (PKGQKGSVGDPGMEGPMGQRGREGPMGPRGEA), 661 to 673 (PGSVGPKGSSGSP), 735 to 748 (EPGAKGAMGPAGPD), and 774 to 796 (DPGKPGLTGPQGPQGLPGTPGRP). Composition is skewed to pro residues over residues 820 to 841 (PGPPGPPGAMGPPGPPGAPGPA), 858 to 881 (PPGPPGPRGPPGPSIPGPPGPRGP), and 907 to 916 (PPGPPGPPGP). Composition is skewed to low complexity over residues 936–946 (GFSTSGSSSFG) and 968–987 (PGVPGALGIPSGPSEGGSSS). Pro residues-rich tracts occupy residues 994–1004 (PPGPPGPPGPP), 1214–1228 (PGPPGPPGPPGPRGP), and 1266–1275 (PPGPPGPQGP). The span at 1289–1312 (SRGSSSSSHSSSVRRGSSYSSSMS) shows a compositional bias: low complexity. Residue N1421 is glycosylated (N-linked (GlcNAc...) asparagine). The segment at 1434–1497 (GAIQGPPGQK…RRRRSIAVKP (64 aa)) is disordered. Over residues 1458 to 1469 (AGPPGHPGPPGP) the composition is skewed to pro residues. Residues 1472–1481 (HKGEKGDKGD) show a composition bias toward basic and acidic residues. The segment at 1483 to 1497 (VYAGRRRRRSIAVKP) is nonhelical region (NC1). Positions 1486–1497 (GRRRRRSIAVKP) are enriched in basic residues.

Homotrimers of alpha 1(XVII)chains. Interacts (via cytoplasmic region) with ITGB4 (via cytoplasmic region). Interacts (via cytoplasmic region) with DST isoform 3 (via N-terminus). Interacts (via N-terminus) with PLEC. Interacts (via cytoplasmic region) with DSP. Post-translationally, the intracellular/endo domain is disulfide-linked. In terms of processing, prolines at the third position of the tripeptide repeating unit (G-X-Y) are hydroxylated in some or all of the chains. The ectodomain is shedded from the surface of keratinocytes resulting in a 120-kDa soluble form, also named as 120 kDa linear IgA disease antigen. The shedding is mediated by membrane-bound metalloproteases. This cleavage is inhibited by phosphorylation at Ser-544. Detected in skin. In the cornea, it is detected in the epithelial basement membrane, the epithelial cells, and at a lower level in stromal cells (at protein level). Stratified squamous epithelia. Found in hemidesmosomes. Expressed in cornea, oral mucosa, esophagus, intestine, kidney collecting ducts, ureter, bladder, urethra and thymus but is absent in lung, blood vessels, skeletal muscle and nerves.

Its subcellular location is the cell junction. It localises to the hemidesmosome. It is found in the membrane. The protein localises to the secreted. The protein resides in the extracellular space. Its subcellular location is the extracellular matrix. It localises to the basement membrane. May play a role in the integrity of hemidesmosome and the attachment of basal keratinocytes to the underlying basement membrane. In terms of biological role, the 120 kDa linear IgA disease antigen is an anchoring filament component involved in dermal-epidermal cohesion. Is the target of linear IgA bullous dermatosis autoantibodies. In Homo sapiens (Human), this protein is Collagen alpha-1(XVII) chain (COL17A1).